The primary structure comprises 185 residues: GTP cyclohydrolase 1 (185 aa).

Cysteine 75, histidine 78, and cysteine 146 together coordinate Zn(2+).

Belongs to the GTP cyclohydrolase I family. In terms of assembly, toroid-shaped homodecamer, composed of two pentamers of five dimers.

It carries out the reaction GTP + H2O = 7,8-dihydroneopterin 3'-triphosphate + formate + H(+). The protein operates within cofactor biosynthesis; 7,8-dihydroneopterin triphosphate biosynthesis; 7,8-dihydroneopterin triphosphate from GTP: step 1/1. The sequence is that of GTP cyclohydrolase 1 from Alkalilimnicola ehrlichii (strain ATCC BAA-1101 / DSM 17681 / MLHE-1).